The chain runs to 473 residues: Benzoyl-CoA oxygenase component B (473 aa).

It belongs to the benzoyl-CoA oxygenase component B family. As to quaternary structure, monomer. The subunit composition of the active BoxA/BoxB protein complex is not known. The cofactor is Fe cation.

The catalysed reaction is benzoyl-CoA + NADPH + O2 + H(+) = 2,3-epoxy-2,3-dihydrobenzoyl-CoA + NADP(+) + H2O. The BoxA/BoxB complex catalyzes the aerobic reduction/oxygenation of the aromatic ring of benzoyl-CoA to form 2,3-epoxy-2,3-dihydrobenzoyl-CoA. BoxB acts as the benzoyl-CoA oxygenase, after being reduced by the reductase component BoxA. BoxAB does not act on NADH or benzoate. The protein is Benzoyl-CoA oxygenase component B (boxB) of Aromatoleum evansii (Azoarcus evansii).